The chain runs to 264 residues: Probable membrane transporter protein HI_0902 (264 aa).

Helical transmembrane passes span 4–24, 28–48, 49–69, 81–101, 107–127, 147–167, 183–203, 210–230, and 243–263; these read FILLCLLVGALAGFLAGLFGI, LVIVPTLVYLLPIVDVPESLL, MSTALGTSFATIVITGIGSAQ, AVRILAPVIMLSVFICGLFIG, ISAKIFACLVVYLATKMVLSI, ILIGMASSAAGIGGGGFIVPF, AFCGMLLGISGMFSFIVSGWG, YSLGYIYLPAVLGITATSFFT, and VSTLKKGFALFLIVVAINMFL.

It belongs to the 4-toluene sulfonate uptake permease (TSUP) (TC 2.A.102) family.

The protein resides in the cell membrane. This is Probable membrane transporter protein HI_0902 from Haemophilus influenzae (strain ATCC 51907 / DSM 11121 / KW20 / Rd).